A 171-amino-acid chain; its full sequence is Inosine/xanthosine triphosphatase (171 aa).

8-13 (TTNPAK) lines the substrate pocket. Mg(2+) is bound by residues Asp-38 and Gln-68.

This sequence belongs to the YjjX NTPase family. As to quaternary structure, homodimer. Mg(2+) serves as cofactor. Requires Mn(2+) as cofactor.

It carries out the reaction XTP + H2O = XDP + phosphate + H(+). The catalysed reaction is ITP + H2O = IDP + phosphate + H(+). In terms of biological role, phosphatase that hydrolyzes non-canonical purine nucleotides such as XTP and ITP to their respective diphosphate derivatives. Probably excludes non-canonical purines from DNA/RNA precursor pool, thus preventing their incorporation into DNA/RNA and avoiding chromosomal lesions. The polypeptide is Inosine/xanthosine triphosphatase (Cronobacter sakazakii (strain ATCC BAA-894) (Enterobacter sakazakii)).